Reading from the N-terminus, the 67-residue chain is MPKMKTKSAAKKRFKITATGKVVAAAAGKRHGMIKRTNKFIRDARGTMVLAEADGKKVVKNYLPNGL.

Belongs to the bacterial ribosomal protein bL35 family.

The protein is Large ribosomal subunit protein bL35 of Agrobacterium fabrum (strain C58 / ATCC 33970) (Agrobacterium tumefaciens (strain C58)).